The primary structure comprises 607 residues: CUB and zona pellucida-like domain-containing protein 1 (607 aa).

The first 24 residues, 1 to 24, serve as a signal peptide directing secretion; that stretch reads MELVRRLMPLTLLILSCLAELTMA. A disulfide bridge links Cys17 with Cys58. 2 CUB domains span residues 25 to 146 and 154 to 265; these read EAEG…YFFS and CGGY…YTSI. Topologically, residues 25–568 are lumenal; the sequence is EAEGNASCTV…EETPNQPFNS (544 aa). N-linked (GlcNAc...) asparagine glycosylation is found at Asn29, Asn57, and Asn67. Disulfide bonds link Cys85–Cys107, Cys154–Cys180, and Cys207–Cys229. One can recognise a ZP domain in the interval 276–519; that stretch reads TCSSDRMRVI…SRCNQGCVSR (244 aa). N-linked (GlcNAc...) asparagine glycans are attached at residues Asn394 and Asn419. Cys442 and Cys498 form a disulfide bridge. The chain crosses the membrane as a helical span at residues 569–589; the sequence is VHLFSFMVLALNVVTVATITV. Residues 590 to 607 lie on the Cytoplasmic side of the membrane; it reads RHFVNQRADYKYQKLQNY.

As to expression, detected in pancreas and epithelium of ovary. Expressed at higher levels in ovarian tumors than in normal tissue.

The protein resides in the zymogen granule membrane. Functionally, localized to zymogen granules, where it functions in trypsinogen activation. May indirectly regulate cell motility, cell-cell and cell/extracellular matrix interactions. The sequence is that of CUB and zona pellucida-like domain-containing protein 1 from Homo sapiens (Human).